We begin with the raw amino-acid sequence, 165 residues long: Protein SprT (165 aa).

In terms of domain architecture, SprT-like spans 22–163 (LAQANLKLDR…RCVHCGEPLV (142 aa)). H78 is a Zn(2+) binding site. E79 is an active-site residue. H82 contributes to the Zn(2+) binding site.

This sequence belongs to the SprT family. Zn(2+) is required as a cofactor.

The protein localises to the cytoplasm. In Salmonella paratyphi C (strain RKS4594), this protein is Protein SprT.